A 49-amino-acid polypeptide reads, in one-letter code: Toxic protein HokB (49 aa).

A helical membrane pass occupies residues 4-24; it reads NPLVVCLLIICITILTFTLLT.

The protein belongs to the Hok/Gef family.

It localises to the cell inner membrane. Its function is as follows. Toxic component of a type I toxin-antitoxin (TA) system. When overexpressed kills cells within minutes; causes collapse of the transmembrane potential and arrest of respiration. Expression leads to membrane depolarization; when protein levels are high enough depolarization probably leads to lowered metabolic activity which in turn induces some cells to enter the persistent state in which they transiently survive antibiotic exposure. Its toxic effect is probably neutralized by antisense antitoxin RNA SokB, which is encoded in trans on the opposite DNA strand. This chain is Toxic protein HokB, found in Escherichia coli (strain K12).